Consider the following 392-residue polypeptide: Putative transactivator/viroplasmin protein (392 aa).

Residues 1 to 88 (MEDMMKQILE…NVEEQYQWKN (88 aa)) are a coiled coil. The tract at residues 358-392 (EIEKEEPGEEKNLEDVSTDDNNEKKKIRSVIVKET) is disordered.

Belongs to the caulimoviridae viroplasmin family.

The protein resides in the host cytoplasm. Its function is as follows. Enhances the translation of downstream ORFs on polycistronic mRNAs derived from cassava vein mosaic virus. The chain is Putative transactivator/viroplasmin protein from Cassava vein mosaic virus (CsVMV).